Consider the following 247-residue polypeptide: NAD(P)H-quinone oxidoreductase subunit K, chloroplastic (247 aa).

Cys64, Cys65, Cys129, and Cys160 together coordinate [4Fe-4S] cluster.

Belongs to the complex I 20 kDa subunit family. NDH is composed of at least 16 different subunits, 5 of which are encoded in the nucleus. The cofactor is [4Fe-4S] cluster.

It is found in the plastid. The protein localises to the chloroplast thylakoid membrane. It catalyses the reaction a plastoquinone + NADH + (n+1) H(+)(in) = a plastoquinol + NAD(+) + n H(+)(out). It carries out the reaction a plastoquinone + NADPH + (n+1) H(+)(in) = a plastoquinol + NADP(+) + n H(+)(out). In terms of biological role, NDH shuttles electrons from NAD(P)H:plastoquinone, via FMN and iron-sulfur (Fe-S) centers, to quinones in the photosynthetic chain and possibly in a chloroplast respiratory chain. The immediate electron acceptor for the enzyme in this species is believed to be plastoquinone. Couples the redox reaction to proton translocation, and thus conserves the redox energy in a proton gradient. The protein is NAD(P)H-quinone oxidoreductase subunit K, chloroplastic of Mesostigma viride (Green alga).